The sequence spans 100 residues: Elevenin-Vc1 (100 aa).

Residues 1–24 (MAPSQKALLVLVLSMLLTASDSWA) form the signal peptide. Cys-29 and Cys-38 are joined by a disulfide. Positions 44-100 (KRGGDSLSVGGSAELDDALTDPFLRSEEPREWRELTRLSRVLQTFLSHPTGETEQHD) are excised as a propeptide.

It belongs to the elevenin family. Monomer. As to expression, expressed by the venom duct.

Its subcellular location is the secreted. Functionally, may mimic the function of prey elevenin neuropeptide. In vivo, intracranial injection in mice induces hyperactivity (tested at 5 and 10 nM). The protein is Elevenin-Vc1 of Conus victoriae (Queen Victoria cone).